Consider the following 293-residue polypeptide: 4-hydroxy-tetrahydrodipicolinate synthase (293 aa).

A pyruvate-binding site is contributed by threonine 47. The Proton donor/acceptor role is filled by tyrosine 135. Catalysis depends on lysine 163, which acts as the Schiff-base intermediate with substrate. Isoleucine 204 is a pyruvate binding site.

It belongs to the DapA family. In terms of assembly, homotetramer; dimer of dimers.

It is found in the cytoplasm. The enzyme catalyses L-aspartate 4-semialdehyde + pyruvate = (2S,4S)-4-hydroxy-2,3,4,5-tetrahydrodipicolinate + H2O + H(+). It participates in amino-acid biosynthesis; L-lysine biosynthesis via DAP pathway; (S)-tetrahydrodipicolinate from L-aspartate: step 3/4. In terms of biological role, catalyzes the condensation of (S)-aspartate-beta-semialdehyde [(S)-ASA] and pyruvate to 4-hydroxy-tetrahydrodipicolinate (HTPA). This chain is 4-hydroxy-tetrahydrodipicolinate synthase, found in Brachyspira hyodysenteriae (strain ATCC 49526 / WA1).